The sequence spans 396 residues: Interleukin-3 receptor subunit alpha (396 aa).

Residues 1-16 (MAANLWLILGLLASHS) form the signal peptide. The Extracellular portion of the chain corresponds to 17–331 (SDLAAVREAP…VCPPEVMPVK (315 aa)). 5 disulfide bridges follow: C62-C79, C87-C223, C125-C134, C165-C187, and C245-C323. An N-linked (GlcNAc...) asparagine glycan is attached at N91. N213, N246, N272, and N283 each carry an N-linked (GlcNAc...) asparagine glycan. Positions 312–316 (LSSWS) match the WSXWS motif motif. A helical membrane pass occupies residues 332–355 (TALVTSVATVLGAGLVAAGLLLWW). The Cytoplasmic portion of the chain corresponds to 356 to 396 (RKSLLYRLCPPIPRLRLPLAGEMVVWEPALEDCEVTPVTDA). K357 participates in a covalent cross-link: Glycyl lysine isopeptide (Lys-Gly) (interchain with G-Cter in ubiquitin). Residues 363–371 (LCPPIPRLR) carry the Box 1 motif motif.

The protein belongs to the type I cytokine receptor family. Type 5 subfamily. As to quaternary structure, interacts with IL3. Heterodimer of an alpha and a beta subunit. The beta subunit is common to the IL3, IL5 and GM-CSF receptors. Post-translationally, ubiquitinated at Lys-357 by RNFT2 in response to IL3. Ubiquitination leads ligand-induced degradation by the proteasome. Ubiquitinated by RNF128 via 'Lys-27'-linked polyubiquitination, facilitating its degradation through the lysosomal pathway.

It localises to the cell membrane. It is found in the endomembrane system. Cell surface receptor for IL3 expressed on hematopoietic progenitor cells, monocytes and B-lymphocytes that controls the production and differentiation of hematopoietic progenitor cells into lineage-restricted cells. Ligand stimulation rapidly induces hetrodimerization with IL3RB, phosphorylation and enzyme activity of effector proteins such as JAK2 and PI3K that play a role in signaling cell proliferation and differentiation. Activation of JAK2 leads to STAT5-mediated transcriptional program. The protein is Interleukin-3 receptor subunit alpha (Il3ra) of Mus musculus (Mouse).